We begin with the raw amino-acid sequence, 107 residues long: Small ribosomal subunit protein bS16 (107 aa).

The disordered stretch occupies residues 85 to 107 (REARNNPEKAVPRKERKAAEAGK).

The protein belongs to the bacterial ribosomal protein bS16 family.

The protein is Small ribosomal subunit protein bS16 of Rhodopseudomonas palustris (strain BisB5).